The sequence spans 65 residues: Large ribosomal subunit protein bL35 (65 aa).

This sequence belongs to the bacterial ribosomal protein bL35 family.

This Aliarcobacter butzleri (strain RM4018) (Arcobacter butzleri) protein is Large ribosomal subunit protein bL35.